We begin with the raw amino-acid sequence, 354 residues long: GDSL esterase/lipase At3g09930 (354 aa).

The N-terminal stretch at 1 to 24 (MELPKLLISLFLFSFSSFFLGAES) is a signal peptide. S46 (nucleophile) is an active-site residue. N-linked (GlcNAc...) asparagine glycosylation is found at N133, N233, N237, N256, and N300. Catalysis depends on residues D329 and H332.

Belongs to the 'GDSL' lipolytic enzyme family.

Its subcellular location is the secreted. The protein is GDSL esterase/lipase At3g09930 of Arabidopsis thaliana (Mouse-ear cress).